We begin with the raw amino-acid sequence, 514 residues long: Retron Vc95 probable ATPase (514 aa).

The ATP-binding motif lies at 92–99 (GNNGSGKS).

In terms of biological role, probable ATPase component of antiviral defense system retron Vc95, composed of a non-coding RNA (ncRNA), a reverse transcriptase (RT), this protein and a putative HNH endonuclease. Expression of retron Vc95 confers protection against bacteriophages T2, T4 and T6. At multiplicity of infection (MOI) of 0.02 cultures slow growth when infected with T4 but do not collapse, at MOI 2 cultures enter growth stasis. This is Retron Vc95 probable ATPase from Vibrio cholerae serotype O1 biovar El Tor.